A 216-amino-acid polypeptide reads, in one-letter code: Imidazole glycerol phosphate synthase subunit HisH (216 aa).

Residues 2–216 (SVAIVDYGSG…LISNFLKWKP (215 aa)) form the Glutamine amidotransferase type-1 domain. Residue Cys-88 is the Nucleophile of the active site. Catalysis depends on residues His-196 and Glu-198.

Heterodimer of HisH and HisF.

It localises to the cytoplasm. The catalysed reaction is 5-[(5-phospho-1-deoxy-D-ribulos-1-ylimino)methylamino]-1-(5-phospho-beta-D-ribosyl)imidazole-4-carboxamide + L-glutamine = D-erythro-1-(imidazol-4-yl)glycerol 3-phosphate + 5-amino-1-(5-phospho-beta-D-ribosyl)imidazole-4-carboxamide + L-glutamate + H(+). It carries out the reaction L-glutamine + H2O = L-glutamate + NH4(+). It participates in amino-acid biosynthesis; L-histidine biosynthesis; L-histidine from 5-phospho-alpha-D-ribose 1-diphosphate: step 5/9. Functionally, IGPS catalyzes the conversion of PRFAR and glutamine to IGP, AICAR and glutamate. The HisH subunit catalyzes the hydrolysis of glutamine to glutamate and ammonia as part of the synthesis of IGP and AICAR. The resulting ammonia molecule is channeled to the active site of HisF. This is Imidazole glycerol phosphate synthase subunit HisH from Rhodopseudomonas palustris (strain ATCC BAA-98 / CGA009).